The sequence spans 758 residues: Glucan endo-1,3-beta-D-glucosidase (758 aa).

Positions 1-34 (MSHASRRRWRRATTSAATAALLCGALLTFPSAPA) form a signal peptide, tat-type signal. Residues 38–251 (VRLGSGSYTT…SGYASVALLP (214 aa)) are beta-sandwich subdomain. One can recognise a GH81 domain in the interval 38-704 (VRLGSGSYTT…QWLSTLAEFG (667 aa)). Residues 252 to 342 (SPDDFDRYAP…EGDRFTTELT (91 aa)) form an alpha/beta subdomain region. The tract at residues 352 to 704 (TVDSADHQRL…QWLSTLAEFG (353 aa)) is (alpha/beta)6 barrel subdomain. Tyr382, Lys386, Asp457, His461, Asn532, Glu534, and Glu538 together coordinate (1,3-beta-D-glucosyl)n. Residue Asp457 is part of the active site. Residues Glu534 and Glu538 contribute to the active site.

Belongs to the glycosyl hydrolase 81 family. In terms of processing, predicted to be exported by the Tat system. The position of the signal peptide cleavage has not been experimentally proven.

The protein resides in the secreted. The catalysed reaction is Hydrolysis of (1-&gt;3)-beta-D-glucosidic linkages in (1-&gt;3)-beta-D-glucans.. Its function is as follows. Cleaves internal linkages in 1,3-beta-glucan. May contribute to biomass degradation by hydrolyzing the 1,3-beta-linked plant polymer callose that is present in decomposing plant tissue. This chain is Glucan endo-1,3-beta-D-glucosidase, found in Thermobifida fusca (strain YX).